The following is a 143-amino-acid chain: ATP synthase subunit b' (143 aa).

The helical transmembrane segment at 6–26 threads the bilayer; the sequence is ATLPLMALQFVVLAFLLNAIF.

The protein belongs to the ATPase B chain family. In terms of assembly, F-type ATPases have 2 components, F(1) - the catalytic core - and F(0) - the membrane proton channel. F(1) has five subunits: alpha(3), beta(3), gamma(1), delta(1), epsilon(1). F(0) has four main subunits: a(1), b(1), b'(1) and c(10-14). The alpha and beta chains form an alternating ring which encloses part of the gamma chain. F(1) is attached to F(0) by a central stalk formed by the gamma and epsilon chains, while a peripheral stalk is formed by the delta, b and b' chains.

Its subcellular location is the cellular thylakoid membrane. In terms of biological role, f(1)F(0) ATP synthase produces ATP from ADP in the presence of a proton or sodium gradient. F-type ATPases consist of two structural domains, F(1) containing the extramembraneous catalytic core and F(0) containing the membrane proton channel, linked together by a central stalk and a peripheral stalk. During catalysis, ATP synthesis in the catalytic domain of F(1) is coupled via a rotary mechanism of the central stalk subunits to proton translocation. Functionally, component of the F(0) channel, it forms part of the peripheral stalk, linking F(1) to F(0). The b'-subunit is a diverged and duplicated form of b found in plants and photosynthetic bacteria. In Synechocystis sp. (strain ATCC 27184 / PCC 6803 / Kazusa), this protein is ATP synthase subunit b'.